The primary structure comprises 229 residues: Putative N-acetylmannosamine-6-phosphate 2-epimerase (229 aa).

The protein belongs to the NanE family.

The catalysed reaction is an N-acyl-D-glucosamine 6-phosphate = an N-acyl-D-mannosamine 6-phosphate. Its pathway is amino-sugar metabolism; N-acetylneuraminate degradation; D-fructose 6-phosphate from N-acetylneuraminate: step 3/5. Functionally, converts N-acetylmannosamine-6-phosphate (ManNAc-6-P) to N-acetylglucosamine-6-phosphate (GlcNAc-6-P). This is Putative N-acetylmannosamine-6-phosphate 2-epimerase from Escherichia coli O157:H7.